We begin with the raw amino-acid sequence, 184 residues long: Putative pre-16S rRNA nuclease (184 aa).

A disordered region spans residues 1–23 (MFSSQHRLLYQPSGPDLSKNLDP).

It belongs to the YqgF nuclease family.

The protein localises to the cytoplasm. Functionally, could be a nuclease involved in processing of the 5'-end of pre-16S rRNA. The sequence is that of Putative pre-16S rRNA nuclease from Mycobacterium leprae (strain Br4923).